Here is a 233-residue protein sequence, read N- to C-terminus: Small ribosomal subunit protein uS2 (233 aa).

Belongs to the universal ribosomal protein uS2 family.

The chain is Small ribosomal subunit protein uS2 from Clostridium botulinum (strain Eklund 17B / Type B).